Reading from the N-terminus, the 299-residue chain is MTSSSAPVLPQNILSIQSWVSYGHVGNAAALFPLQRLGFEVWTINTVQFSNHTGYGEWTGSVFPPELVADLLNGIAARGVLPTCAAVLSGYMGSEGTVSAVVEAVRRVREANPAALYCCDPVMGDVGRGVFVRPELPDLIRTQAVPEADIVTPNQFELELLTGRRVTRLQEALDASRMLRGTLREGGPRLVVVTSLVREDAPQGVIETLAVTGEGAWLCRTPLLPLDPPRNGTGDAIAALFLGHYLRTQDAGTALSLSMSALFAVLDLTHRVGTREIQLVAAQDEYTRPSRVFEAERVA.

S18 serves as a coordination point for substrate. ATP contacts are provided by D120 and E157. D235 is a binding site for substrate.

This sequence belongs to the pyridoxine kinase family. PdxY subfamily. In terms of assembly, homodimer. The cofactor is Mg(2+).

The catalysed reaction is pyridoxal + ATP = pyridoxal 5'-phosphate + ADP + H(+). Its pathway is cofactor metabolism; pyridoxal 5'-phosphate salvage; pyridoxal 5'-phosphate from pyridoxal: step 1/1. In terms of biological role, pyridoxal kinase involved in the salvage pathway of pyridoxal 5'-phosphate (PLP). Catalyzes the phosphorylation of pyridoxal to PLP. This is Pyridoxal kinase PdxY from Deinococcus geothermalis (strain DSM 11300 / CIP 105573 / AG-3a).